The sequence spans 186 residues: Acetyltransferase PA2578 (186 aa).

The region spanning 12-176 is the N-acetyltransferase domain; that stretch reads LQLVPFQLGH…NVVLMGLLRQ (165 aa). CoA contacts are provided by residues Q37, 97–99, G105, N137, and 142–144; these read IVL and HLY.

As to quaternary structure, homodimer.

Functionally, catalyzes the transfer of an acetyl group from acetyl coenzyme A (AcCoA) to an acceptor substrate and releases both CoA and the acetylated product. It prefers the antibiotic chloramphenicol. This is Acetyltransferase PA2578 from Pseudomonas aeruginosa (strain ATCC 15692 / DSM 22644 / CIP 104116 / JCM 14847 / LMG 12228 / 1C / PRS 101 / PAO1).